We begin with the raw amino-acid sequence, 510 residues long: Cytochrome P450 90D2 (510 aa).

Residues 6–26 (MVGSGGVYSWPAALLVAAIVV) traverse the membrane as a helical segment. Cys-444 contacts heme.

This sequence belongs to the cytochrome P450 family. Heme serves as cofactor.

Its subcellular location is the membrane. The enzyme catalyses 3-epi-6-deoxocathasterone + reduced [NADPH--hemoprotein reductase] + O2 = 6-deoxotyphasterol + oxidized [NADPH--hemoprotein reductase] + H2O + H(+). It catalyses the reaction (22S,24R)-22-hydroxy-5alpha-ergostan-3-one + reduced [NADPH--hemoprotein reductase] + O2 = 3-dehydro-6-deoxoteasterone + oxidized [NADPH--hemoprotein reductase] + H2O + H(+). It carries out the reaction 6-deoxycathasterone + reduced [NADPH--hemoprotein reductase] + O2 = 6-deoxoteasterone + oxidized [NADPH--hemoprotein reductase] + H2O + H(+). It functions in the pathway plant hormone biosynthesis; brassinosteroid biosynthesis. In terms of biological role, involved in reduction steps of the biosynthesis of plant campesterol-derivative steroids, ending to castasterone (CS) but missing brassinolide (BL). Catalyzes the conversion of (22S,24R)-22-hydroxy-5alpha-ergostan-3-one (22-hydroxy-campesta-3-one, 22-OH-3-one) to 3-dehydro-6-deoxoteasterone (6-deoxo3DT, 6-deoxo-3-DHT), 3-epi-6-deoxocathasterone (3-epi-6-deoxoCT) to 6-deoxotyphasterol (6-deoxoTY) and of 6-deoxocathasterone (6-deoxoCT) to 6-deoxoteasterone (6-deoxoTE). The chain is Cytochrome P450 90D2 from Brachypodium distachyon (Purple false brome).